The following is an 86-amino-acid chain: MKTLLLTLVVVTIVCLDLGYTLTCLICPEKYCQKVHTCRDGENLCVKRFYEGKRFGKKYPRGCAATCPEAKPHEIVECCSTDKCNK.

An N-terminal signal peptide occupies residues 1–21 (MKTLLLTLVVVTIVCLDLGYT). Intrachain disulfides connect Cys-24/Cys-45, Cys-27/Cys-32, Cys-38/Cys-63, Cys-67/Cys-78, and Cys-79/Cys-84.

Expressed by the venom gland.

It is found in the secreted. Binds with low affinity to muscular (alpha-1-beta-1-delta-epsilon/CHRNA1-CHRNB1-CHRND-CHRNE) and very low affinity to neuronal (alpha-7/CHRNA7) nicotinic acetylcholine receptor (nAChR). This Bungarus fasciatus (Banded krait) protein is Neurotoxin 3FTx-LT.